Here is a 457-residue protein sequence, read N- to C-terminus: MPFTFQIGNHSCQISERYLRDIIDNKREHVFSTCEKFIDFFRNIFTRRSLISDYREIYNLLCQKKEHPDIKGPFSPGPFSKRDEDCTRWRPLLGYIKLIDASRPETIDKYTVEVLAHQENMLLLQMFYDGVLVTETECSERCVDFLKETMFNYNNGEITLAALGNDNLPPSEAGSNGIYEAFEQRLIDFLTTPATASGYESGAIDQTDASQPAAIEAFINSPEFQKNIRMRDIEKNKIGSGSYGTVYRLHDDFVVKIPVNERGIKVDVNSPEHRNCHPDRVSKYLNMANDDKNFSRSAIMNINGKDVTVLVSKYIQGQEFDVEDEDNYRMAEALLKSRGVYMHDINILGNILVKEGVLFFVDGDQIVLSQESRQQRSVSLATRQLEEQIKAHHMIKLKRAETEGNTEDVEYYKSLITDLDALIGEEEQTPAPGRRFKLAAPEEGTLVAKVLKDELKK.

Position 256 (Lys256) interacts with ATP.

It belongs to the protein kinase superfamily. Post-translationally, autophosphorylated.

Its subcellular location is the secreted. It is found in the host cytoplasm. Its function is as follows. Effector proteins function to alter host cell physiology and promote bacterial survival in host tissues. This protein is a kinase, which is required for SPI-2 T3SS-dependent F-actin meshwork formation in infected host cells. The chain is Secreted effector kinase SteC (steC) from Salmonella typhimurium (strain LT2 / SGSC1412 / ATCC 700720).